Consider the following 583-residue polypeptide: Threonine--tRNA ligase (583 aa).

The tract at residues 185 to 478 is catalytic; it reads DHRKLGRELN…LVEHYGGAFP (294 aa). Zn(2+) is bound by residues Cys278, His329, and His455.

The protein belongs to the class-II aminoacyl-tRNA synthetase family. Homodimer. Zn(2+) is required as a cofactor.

The protein localises to the cytoplasm. The enzyme catalyses tRNA(Thr) + L-threonine + ATP = L-threonyl-tRNA(Thr) + AMP + diphosphate + H(+). In terms of biological role, catalyzes the attachment of threonine to tRNA(Thr) in a two-step reaction: L-threonine is first activated by ATP to form Thr-AMP and then transferred to the acceptor end of tRNA(Thr). Also edits incorrectly charged L-seryl-tRNA(Thr). The sequence is that of Threonine--tRNA ligase from Borrelia duttonii (strain Ly).